The sequence spans 270 residues: Nuclease PA3 (270 aa).

A divalent metal cation-binding residues include tryptophan 1, histidine 6, histidine 15, aspartate 45, and histidine 60. 1 to 6 (WGALGH) lines the substrate pocket. Substrate-binding positions include 45-51 (DEYRLTS), 60-63 (HFID), and 73-78 (NVDYER). 2 disulfide bridges follow: cysteine 72/cysteine 217 and cysteine 80/cysteine 85. Residue asparagine 92 coordinates substrate. N-linked (GlcNAc...) asparagine glycosylation is present at asparagine 92. A divalent metal cation-binding residues include histidine 116, aspartate 120, and histidine 126. Residues 116 to 164 (HFIGDMTQPLHDEAYAVGGNKINVTFDGYHDNLHSDWDTYMPQKLIGGH) form a substrate binding region. Asparagine 138 carries an N-linked (GlcNAc...) asparagine glycan. A divalent metal cation-binding residues include histidine 149 and aspartate 153. 2 N-linked (GlcNAc...) asparagine glycosylation sites follow: asparagine 184 and asparagine 197.

Belongs to the nuclease type I family. The cofactor is Zn(2+).

The protein resides in the secreted. It carries out the reaction a ribonucleoside 3'-phosphate + H2O = a ribonucleoside + phosphate. Its function is as follows. Hydrolyzes only single-stranded DNA and RNA without apparent specificity for bases. The sequence is that of Nuclease PA3 from Penicillium sp.